The chain runs to 129 residues: Ubiquinol-cytochrome-c reductase complex assembly factor 2 (129 aa).

A mitochondrion-targeting transit peptide spans 1–13; it reads MSATRYRRFLKLC.

It is found in the mitochondrion matrix. Its subcellular location is the mitochondrion nucleoid. It localises to the mitochondrion. Functionally, required for the assembly of the ubiquinol-cytochrome c reductase complex (mitochondrial respiratory chain complex III or cytochrome b-c1 complex). May play a role in the modulation of respiratory chain activities such as oxygen consumption and ATP production. May be involved in cytochrome b translation and/or stability. The polypeptide is Ubiquinol-cytochrome-c reductase complex assembly factor 2 (uqcc2) (Danio rerio (Zebrafish)).